A 37-amino-acid chain; its full sequence is Large ribosomal subunit protein bL36 (37 aa).

This sequence belongs to the bacterial ribosomal protein bL36 family.

This chain is Large ribosomal subunit protein bL36, found in Mycobacterium leprae (strain Br4923).